Here is a 161-residue protein sequence, read N- to C-terminus: Nucleotide-binding protein PBPRA2024 (161 aa).

This sequence belongs to the YajQ family.

Functionally, nucleotide-binding protein. This Photobacterium profundum (strain SS9) protein is Nucleotide-binding protein PBPRA2024.